Reading from the N-terminus, the 132-residue chain is Ribosome-binding factor A (132 aa).

It belongs to the RbfA family. As to quaternary structure, monomer. Binds 30S ribosomal subunits, but not 50S ribosomal subunits or 70S ribosomes.

The protein localises to the cytoplasm. In terms of biological role, one of several proteins that assist in the late maturation steps of the functional core of the 30S ribosomal subunit. Associates with free 30S ribosomal subunits (but not with 30S subunits that are part of 70S ribosomes or polysomes). Required for efficient processing of 16S rRNA. May interact with the 5'-terminal helix region of 16S rRNA. The chain is Ribosome-binding factor A from Rhizorhabdus wittichii (strain DSM 6014 / CCUG 31198 / JCM 15750 / NBRC 105917 / EY 4224 / RW1) (Sphingomonas wittichii).